Here is a 549-residue protein sequence, read N- to C-terminus: Chaperonin GroEL (549 aa).

ATP is bound by residues 29-32 (TAGP), Lys50, 86-90 (DGTTT), Gly417, and Asp499.

Belongs to the chaperonin (HSP60) family. As to quaternary structure, forms a cylinder of 14 subunits composed of two heptameric rings stacked back-to-back. Interacts with the co-chaperonin GroES.

Its subcellular location is the cytoplasm. The enzyme catalyses ATP + H2O + a folded polypeptide = ADP + phosphate + an unfolded polypeptide.. Its function is as follows. Together with its co-chaperonin GroES, plays an essential role in assisting protein folding. The GroEL-GroES system forms a nano-cage that allows encapsulation of the non-native substrate proteins and provides a physical environment optimized to promote and accelerate protein folding. The sequence is that of Chaperonin GroEL from Anaplasma marginale (strain Florida).